The chain runs to 336 residues: Phosphate acyltransferase (336 aa).

It belongs to the PlsX family. In terms of assembly, homodimer. Probably interacts with PlsY.

Its subcellular location is the cytoplasm. It catalyses the reaction a fatty acyl-[ACP] + phosphate = an acyl phosphate + holo-[ACP]. It functions in the pathway lipid metabolism; phospholipid metabolism. Catalyzes the reversible formation of acyl-phosphate (acyl-PO(4)) from acyl-[acyl-carrier-protein] (acyl-ACP). This enzyme utilizes acyl-ACP as fatty acyl donor, but not acyl-CoA. This chain is Phosphate acyltransferase, found in Pseudomonas aeruginosa (strain UCBPP-PA14).